The primary structure comprises 83 residues: Large ribosomal subunit protein bL31B (83 aa).

It belongs to the bacterial ribosomal protein bL31 family. Type B subfamily. Part of the 50S ribosomal subunit.

The sequence is that of Large ribosomal subunit protein bL31B from Levilactobacillus brevis (strain ATCC 367 / BCRC 12310 / CIP 105137 / JCM 1170 / LMG 11437 / NCIMB 947 / NCTC 947) (Lactobacillus brevis).